The chain runs to 881 residues: Tyrosine-protein kinase receptor TYRO3 (881 aa).

The N-terminal stretch at Met-1–Ala-28 is a signal peptide. 2 consecutive Ig-like C2-type domains span residues Leu-29–Ser-114 and Pro-125–Glu-206. At Leu-29 to Trp-414 the chain is on the extracellular side. N-linked (GlcNAc...) asparagine glycosylation is found at Asn-37 and Asn-49. A disulfide bridge connects residues Cys-50 and Cys-103. Asn-143 carries an N-linked (GlcNAc...) asparagine glycan. An intrachain disulfide couples Cys-146 to Cys-189. Fibronectin type-III domains lie at Pro-213–Lys-306 and Ile-311–Glu-401. Asn-216, Asn-279, Asn-351, and Asn-365 each carry an N-linked (GlcNAc...) asparagine glycan. A helical membrane pass occupies residues Val-415–Phe-435. The Cytoplasmic portion of the chain corresponds to Leu-436–Leu-881. The Protein kinase domain maps to Phe-503–Ile-774. ATP contacts are provided by residues Leu-509–Val-517 and Lys-535. Asp-640 serves as the catalytic Proton acceptor. Position 671 is a phosphotyrosine; by autocatalysis (Tyr-671). Positions Glu-846–Leu-881 are disordered. Residues Glu-862–Glu-874 show a composition bias toward acidic residues.

This sequence belongs to the protein kinase superfamily. Tyr protein kinase family. AXL/UFO subfamily. Post-translationally, tyrosine phosphorylated upon receptor stimulation.

Its subcellular location is the cell membrane. It carries out the reaction L-tyrosyl-[protein] + ATP = O-phospho-L-tyrosyl-[protein] + ADP + H(+). In terms of biological role, may be involved in cell adhesion processes, particularly in the central nervous system. This chain is Tyrosine-protein kinase receptor TYRO3 (tyro3), found in Xenopus tropicalis (Western clawed frog).